The sequence spans 470 residues: Calcium/manganese antiporter SLC30A10 (470 aa).

Over 1 to 10 (MGRYSGKTCR) the chain is Cytoplasmic. The chain crosses the membrane as a helical span at residues 11–31 (LLFMLVLTAAFFVAELVSGYL). Residues 32 to 34 (GNS) lie on the Extracellular side of the membrane. A helical transmembrane segment spans residues 35–55 (IALLSDSFNMLSDLISLCVGL). Over 56–81 (GSGYIARRGPRGSSATYGYVRAEVVG) the chain is Cytoplasmic. Residues 82-102 (ALSNAVFLTALCFTIFVEAVL) traverse the membrane as a helical segment. Topologically, residues 103–113 (RLARPERIDDP) are extracellular. A helical membrane pass occupies residues 114-134 (ELVLIVGALGLAVNVVGLLIF). At 135–233 (QDCGACFSRC…KSEALNIRGV (99 aa)) the chain is on the cytoplasmic side. The tract at residues 146 to 223 (RGRRTRPSQQ…EPEETTKKEK (78 aa)) is disordered. Over residues 171–184 (AATATAPGSGTAVT) the composition is skewed to low complexity. Residues 234–254 (LLHVMGDALGSVVVVITAIIF) traverse the membrane as a helical segment. The Extracellular segment spans residues 255–270 (YVQPLRREDPCNWQCY). The helical transmembrane segment at 271–291 (IDPSLTVVMVIIILSSAFPLI) threads the bilayer. The Cytoplasmic segment spans residues 292 to 470 (KETAVILLQM…RQHYENSTHF (179 aa)). Residues 300-470 (QMVPKGVNME…RQHYENSTHF (171 aa)) are required for plasma membrane localization. Residues 451–470 (QGQTLSKTQERQHYENSTHF) form a disordered region. The segment covering 458-470 (TQERQHYENSTHF) has biased composition (basic and acidic residues).

Belongs to the cation diffusion facilitator (CDF) transporter (TC 2.A.4) family. SLC30A subfamily. Forms homodimers. Forms heterodimers and high-molecular weight oligomers with SLC30A3, SLC30A2 and SLC30A4; heterodimerization is mediated by covalent-bound tyrosine residues, occurs probably in a tissue-specific manner and could mediate the intracellular zinc transport activity into early endosomes and recycling endosomes. As to expression, specifically expressed in fetal liver and fetal brain.

It localises to the cell membrane. The protein localises to the golgi apparatus membrane. It is found in the recycling endosome membrane. Its subcellular location is the early endosome membrane. It carries out the reaction Mn(2+)(out) + Ca(2+)(in) = Mn(2+)(in) + Ca(2+)(out). The enzyme catalyses Zn(2+)(in) = Zn(2+)(out). Functionally, calcium:manganese antiporter of the plasma membrane mediating the efflux of intracellular manganese coupled to an active extracellular calcium exchange. Required for intracellular manganese homeostasis, an essential cation for the function of several enzymes, including some crucially important for the metabolism of neurotransmitters and other neuronal metabolic pathways. Manganese can also be cytotoxic and induce oxidative stress, mitochondrial dysfunction and apoptosis. Could also have an intracellular zinc ion transporter activity, directly regulating intracellular zinc ion homeostasis and more indirectly various signaling pathway and biological processes. This chain is Calcium/manganese antiporter SLC30A10, found in Mus musculus (Mouse).